The primary structure comprises 251 residues: Putative fatty acid elongase DDB_G0274669 (251 aa).

The next 5 membrane-spanning stretches (helical) occupy residues 51-71, 82-102, 135-155, 177-197, and 211-231; these read FQII…IKFL, FISI…CVGV, WSYI…IIVL, YITM…VLHV, and AFAA…KFFV.

Belongs to the ELO family.

The protein resides in the membrane. The enzyme catalyses a very-long-chain acyl-CoA + malonyl-CoA + H(+) = a very-long-chain 3-oxoacyl-CoA + CO2 + CoA. Functionally, could be implicated in synthesis of very long chain fatty acids. This chain is Putative fatty acid elongase DDB_G0274669, found in Dictyostelium discoideum (Social amoeba).